The chain runs to 1270 residues: Glycine betaine reductase ATRR (1270 aa).

The interval 14–418 (FTQQVRASPN…MIKLRGYSVV (405 aa)) is adenylation (A) domain. Residues 528 to 605 (KEDPIGIEDI…GHLDTVRAIR (78 aa)) form the Carrier domain. Ser565 is modified (O-(pantetheine 4'-phosphoryl)serine). The tract at residues 643–937 (KTVLLTGVTG…EPLSWDDWVA (295 aa)) is carboxylic acid reductase domain R1. Positions 1026 to 1256 (PLSGKVAVVT…IYALRQPEHV (231 aa)) are aldehyde reductase domain R2.

The protein belongs to the NRP synthetase family.

Its activity is regulated as follows. The tetramethylammonium ion, which mimics the head group of glycine betaine, acts as a competitive inhibitor of ATRR A domain, whereas the potency decreased by three orders of magnitude with dimethylammonium. Choline is a mixed inhibitor for both glycine betaine reductase and aldehyde reductase activity but more potent in competition against glycine betaine in the first reduction step. Therefore, choline could act as a feedback inhibitor to regulate ATRR enzymatic activity. The lowered binding affinity of choline to R2 favors the release of choline after glycine betaine aldehyde reduction to avoid direct product inhibition. NRPS-like enzyme with an unusual domain architecture that converts back glycine betaine to choline via a 2-step reduction mechanism, and thereby can be an alternative source of choline. Permits direct reutilization of endogenously stored glycine betaine for on-demand biosynthesis of choline and choline derivatives, including phospholipid phosphatidylcholine (PC) which has an essential role in maintaining membrane integrity and functionality, or choline-O-sulfate, a mean for intracellular sulfate storage. Glycine betaine is activated by the adenylation (A) domain, and transferred to the thiolation (T) domain. Movement of the phosphopantetheine arm to the thioester reductase domain R1 then allows thioester reduction by NADPH of glycine betainoyl thioester to glycine betaine aldehyde, which is in turn reduced to choline by the aldehyde reductase domain R2. The chain is Glycine betaine reductase ATRR from Emericella nidulans (strain FGSC A4 / ATCC 38163 / CBS 112.46 / NRRL 194 / M139) (Aspergillus nidulans).